The following is a 178-amino-acid chain: Zinc finger CCHC domain-containing protein 10 (178 aa).

A CCHC-type zinc finger spans residues 21–38 (VRCQKCLEFGHWTYECKG). The tract at residues 66-178 (QSIGETNIEK…EPQKKKKKKK (113 aa)) is disordered. Low complexity-rich tracts occupy residues 85–113 (SVTS…SSSS) and 121–164 (SLSS…SSES).

This is Zinc finger CCHC domain-containing protein 10 (Zcchc10) from Mus musculus (Mouse).